Here is a 404-residue protein sequence, read N- to C-terminus: Glucose-1-phosphate adenylyltransferase (404 aa).

Alpha-D-glucose 1-phosphate contacts are provided by residues tyrosine 99, glycine 164, 179 to 180 (EK), and serine 197.

Belongs to the bacterial/plant glucose-1-phosphate adenylyltransferase family. In terms of assembly, homotetramer.

It carries out the reaction alpha-D-glucose 1-phosphate + ATP + H(+) = ADP-alpha-D-glucose + diphosphate. Its pathway is glycan biosynthesis; glycogen biosynthesis. Its function is as follows. Involved in the biosynthesis of ADP-glucose, a building block required for the elongation reactions to produce glycogen. Catalyzes the reaction between ATP and alpha-D-glucose 1-phosphate (G1P) to produce pyrophosphate and ADP-Glc. This is Glucose-1-phosphate adenylyltransferase from Rhodococcus opacus (strain B4).